A 364-amino-acid polypeptide reads, in one-letter code: Mannose-1-phosphate guanyltransferase (364 aa).

The protein belongs to the transferase hexapeptide repeat family.

The protein localises to the cytoplasm. The catalysed reaction is alpha-D-mannose 1-phosphate + GTP + H(+) = GDP-alpha-D-mannose + diphosphate. The protein operates within nucleotide-sugar biosynthesis; GDP-alpha-D-mannose biosynthesis; GDP-alpha-D-mannose from alpha-D-mannose 1-phosphate (GTP route): step 1/1. In terms of biological role, involved in cell wall synthesis where it is required for glycosylation. Involved in cell cycle progression through cell-size checkpoint. The sequence is that of Mannose-1-phosphate guanyltransferase (mpg1) from Aspergillus oryzae (strain ATCC 42149 / RIB 40) (Yellow koji mold).